The following is a 283-amino-acid chain: Circadian clock oscillator protein KaiA (283 aa).

The interval 1-146 (MAQSTALTIC…LFRLPALKES (146 aa)) is psR domain, not required to form KaiA:KaiB:KaiC complex, or for a full KaiC phosphorylation cycle. The KaiA N-terminal domain occupies 3–163 (QSTALTICGL…RLSQKLKERL (161 aa)). The interval 164 to 172 (GYLGVYYKR) is flexible linker. The region spanning 173-281 (DTAFFFRRMS…CEMYRRSIPR (109 aa)) is the KaiA C-terminal domain.

This sequence belongs to the KaiA family. As to quaternary structure, homodimer. The KaiABC complex composition changes during the circadian cycle to control KaiC phosphorylation. Complexes KaiC(6), KaiA(2-4):KaiC(6), KaiB(6):KaiC(6) and KaiC(6):KaiB(6):KaiA(12) are among the most important forms, many form cooperatively. Binds to KaiB and KaiC, the N-terminus (pseudoreceiver domain PsR) is not required for either interaction. 1 KaiB binds to one subunit of the KaiA homodimer. KaiA and CikA bind to the same region of the KaiB(fs) form and therefore compete.

Functionally, key component of the KaiABC oscillator complex, which constitutes the main circadian regulator in cyanobacteria. Complex composition changes during the circadian cycle to control KaiC phosphorylation. KaiA stimulates KaiC autophosphorylation, while KaiB sequesters KaiA, leading to KaiC autodephosphorylation. KaiA binding to the KaiC CII domain during the subjective day yields KaiA(2-4):KaiC(6) complexes which stimulate KaiC autophosphorylation. Phospho-Ser-431 KaiC accumulation triggers binding of KaiB during the subjective night to form the KaiB(6):KaiC(6) complex, leading to changes in the output regulators CikA and SasA. KaiB(6):KaiC(6) formation exposes a site for KaiA binding on KaiB that sequesters KaiA from KaiC's CII domain, making the KaiC(6):KaiB(6):KaiA(12) complex resulting in KaiC autodephosphorylation. Complete dephosphorylation of KaiC leads to dissociation of KaiA(2):KaiB(1), completing 1 cycle of the Kai oscillator. Formation of the KaiB:KaiC complex is promoted by KaiA, helping switch KaiC from its autophosphorylation to autodephosphatase function. Binds oxidized quinones via the N-terminal PsR domain, allowing it to sense redox changes and possibly mediate clock input. The polypeptide is Circadian clock oscillator protein KaiA (Thermosynechococcus vestitus (strain NIES-2133 / IAM M-273 / BP-1)).